Reading from the N-terminus, the 95-residue chain is Large ribosomal subunit protein uL23 (95 aa).

The protein belongs to the universal ribosomal protein uL23 family. Part of the 50S ribosomal subunit. Contacts protein L29, and trigger factor when it is bound to the ribosome.

Functionally, one of the early assembly proteins it binds 23S rRNA. One of the proteins that surrounds the polypeptide exit tunnel on the outside of the ribosome. Forms the main docking site for trigger factor binding to the ribosome. This chain is Large ribosomal subunit protein uL23, found in Leuconostoc mesenteroides subsp. mesenteroides (strain ATCC 8293 / DSM 20343 / BCRC 11652 / CCM 1803 / JCM 6124 / NCDO 523 / NBRC 100496 / NCIMB 8023 / NCTC 12954 / NRRL B-1118 / 37Y).